The primary structure comprises 362 residues: MSKKNNLLVAASGTGGHIFPALAVSKEVEDKWNIHWLGVKQRLDSNLIPKKYNLRTLSIKTPRKNIFLFYQYIEILMSTFQIIRILKEKKINLVFTTGGYISAPTIIASKFLRIPVIIHESNLIPGMVTKYFGFLCNYVLLGFKNTNSYLRNCKTIFTGTPLREQFYKSNPLPEWVPKGKGPLLIVMGGSQGAKAINQILNESLEFLLKKQFRIVHIIGESNQQPFYIKNTKNYIQKKFTNEVAALIQNCDLVISRSGAGTINELIEAEKPSILIPYPDSKNNHQEKNAMIIAESGGSVLINQNNISKEVFEETLERIFKIKSKKGVNHYEILDLMKRNMVNNKIKSKNEIKKFINYFLKEF.

Residues 14-16 (TGG), N122, R163, S190, and Q285 contribute to the UDP-N-acetyl-alpha-D-glucosamine site.

The protein belongs to the glycosyltransferase 28 family. MurG subfamily.

Its subcellular location is the cell inner membrane. It carries out the reaction di-trans,octa-cis-undecaprenyl diphospho-N-acetyl-alpha-D-muramoyl-L-alanyl-D-glutamyl-meso-2,6-diaminopimeloyl-D-alanyl-D-alanine + UDP-N-acetyl-alpha-D-glucosamine = di-trans,octa-cis-undecaprenyl diphospho-[N-acetyl-alpha-D-glucosaminyl-(1-&gt;4)]-N-acetyl-alpha-D-muramoyl-L-alanyl-D-glutamyl-meso-2,6-diaminopimeloyl-D-alanyl-D-alanine + UDP + H(+). It functions in the pathway cell wall biogenesis; peptidoglycan biosynthesis. In terms of biological role, cell wall formation. Catalyzes the transfer of a GlcNAc subunit on undecaprenyl-pyrophosphoryl-MurNAc-pentapeptide (lipid intermediate I) to form undecaprenyl-pyrophosphoryl-MurNAc-(pentapeptide)GlcNAc (lipid intermediate II). The protein is UDP-N-acetylglucosamine--N-acetylmuramyl-(pentapeptide) pyrophosphoryl-undecaprenol N-acetylglucosamine transferase of Prochlorococcus marinus (strain MIT 9215).